We begin with the raw amino-acid sequence, 509 residues long: Steroid 17-alpha-hydroxylase/17,20 lyase (509 aa).

Substrate is bound at residue N202. C442 is a heme binding site.

It belongs to the cytochrome P450 family. The cofactor is heme.

It is found in the endoplasmic reticulum membrane. The protein resides in the microsome membrane. It carries out the reaction a C21-steroid + reduced [NADPH--hemoprotein reductase] + O2 = a 17alpha-hydroxy-C21-steroid + oxidized [NADPH--hemoprotein reductase] + H2O + H(+). It catalyses the reaction progesterone + reduced [NADPH--hemoprotein reductase] + O2 = 17alpha-hydroxyprogesterone + oxidized [NADPH--hemoprotein reductase] + H2O + H(+). The enzyme catalyses pregnenolone + reduced [NADPH--hemoprotein reductase] + O2 = 17alpha-hydroxypregnenolone + oxidized [NADPH--hemoprotein reductase] + H2O + H(+). The catalysed reaction is 17alpha-hydroxyprogesterone + reduced [NADPH--hemoprotein reductase] + O2 = androst-4-ene-3,17-dione + acetate + oxidized [NADPH--hemoprotein reductase] + H2O + 2 H(+). It carries out the reaction 17alpha-hydroxyprogesterone + reduced [NADPH--hemoprotein reductase] + O2 = 16alpha,17alpha-dihydroxyprogesterone + oxidized [NADPH--hemoprotein reductase] + H2O + H(+). It catalyses the reaction 16alpha,17alpha-dihydroxyprogesterone + reduced [NADPH--hemoprotein reductase] + O2 = 6beta,16alpha,17alpha-trihydroxyprogesterone + oxidized [NADPH--hemoprotein reductase] + H2O + H(+). The enzyme catalyses 17alpha-hydroxypregnenolone + reduced [NADPH--hemoprotein reductase] + O2 = 3beta-hydroxyandrost-5-en-17-one + acetate + oxidized [NADPH--hemoprotein reductase] + H2O + 2 H(+). The catalysed reaction is 16alpha,17alpha-dihydroxypregnenolone + reduced [NADPH--hemoprotein reductase] + O2 = 3beta,16alpha-dihydroxy-androst-5-en-17-one + acetate + oxidized [NADPH--hemoprotein reductase] + H2O + 2 H(+). It carries out the reaction 3beta-hydroxyandrost-5-en-17-one + reduced [NADPH--hemoprotein reductase] + O2 = 3beta,16alpha-dihydroxy-androst-5-en-17-one + oxidized [NADPH--hemoprotein reductase] + H2O + H(+). It catalyses the reaction androst-4-ene-3,17-dione + reduced [NADPH--hemoprotein reductase] + O2 = 16alpha-hydroxyandrost-4-ene-3,17-dione + oxidized [NADPH--hemoprotein reductase] + H2O + H(+). Its pathway is steroid hormone biosynthesis. The protein operates within steroid biosynthesis; glucocorticoid biosynthesis. With respect to regulation, regulated predominantly by intracellular cAMP levels. The 17,20-lyase activity is stimulated by cytochrome b5, which acts as an allosteric effector increasing the Vmax of the lyase activity. Its function is as follows. A cytochrome P450 monooxygenase involved in corticoid and androgen biosynthesis. Catalyzes 17-alpha hydroxylation of C21 steroids, which is common for both pathways. A second oxidative step, required only for androgen synthesis, involves an acyl-carbon cleavage. The 17-alpha hydroxy intermediates, as part of adrenal glucocorticoids biosynthesis pathway, are precursors of cortisol. Hydroxylates steroid hormones, pregnenolone and progesterone to form 17-alpha hydroxy metabolites, followed by the cleavage of the C17-C20 bond to form C19 steroids, dehydroepiandrosterone (DHEA) and androstenedione. Has 16-alpha hydroxylase activity. Catalyzes 16-alpha hydroxylation of 17-alpha hydroxy pregnenolone, followed by the cleavage of the C17-C20 bond to form 16-alpha-hydroxy DHEA. Also 16-alpha hydroxylates androgens, relevant for estriol synthesis. Mechanistically, uses molecular oxygen inserting one oxygen atom into a substrate, and reducing the second into a water molecule, with two electrons provided by NADPH via cytochrome P450 reductase (CPR; NADPH-ferrihemoprotein reductase). This Capra hircus (Goat) protein is Steroid 17-alpha-hydroxylase/17,20 lyase (CYP17A1).